The primary structure comprises 225 residues: E3 ubiquitin-protein ligase ATL76 (225 aa).

The helical transmembrane segment at 59-79 threads the bilayer; sequence LMLLSVLICGIICCLGLHYII. The RING-type; atypical zinc-finger motif lies at 135 to 177; sequence CVICLSDFVSGEQLRLLPKCNHGFHVRCIDKWLQHHLTCPKCR.

It belongs to the RING-type zinc finger family. ATL subfamily.

It localises to the membrane. It catalyses the reaction S-ubiquitinyl-[E2 ubiquitin-conjugating enzyme]-L-cysteine + [acceptor protein]-L-lysine = [E2 ubiquitin-conjugating enzyme]-L-cysteine + N(6)-ubiquitinyl-[acceptor protein]-L-lysine.. It participates in protein modification; protein ubiquitination. E3 ubiquitin-protein ligase able to catalyze polyubiquitination with ubiquitin-conjugating enzyme E2 UBC8 in vitro. The polypeptide is E3 ubiquitin-protein ligase ATL76 (ATL76) (Arabidopsis thaliana (Mouse-ear cress)).